Here is a 770-residue protein sequence, read N- to C-terminus: Transducin-like enhancer protein 1 (770 aa).

The segment at 1 to 131 is q domain; that stretch reads MFPQSRHPTP…IIGQQQLQAQ (131 aa). Disordered stretches follow at residues 128–157 and 176–346; these read LQAQ…GIPP and HLAI…PAME. The tract at residues 132-199 is GP domain; that stretch reads HLSHGHGPPV…RHRDRESGTS (68 aa). Residues 146 to 157 are compositionally biased toward low complexity; sequence HPSGLQPPGIPP. Basic and acidic residues-rich tracts occupy residues 178–196 and 209–244; these read AIKD…DRES and RSTD…KSDD. The interval 200–266 is ccN domain; the sequence is NSLLVPDSLR…SPHASPTHSP (67 aa). The Nuclear localization signal motif lies at 225-228; that stretch reads KKRK. Residue S237 is modified to Phosphoserine; by CK2. The segment covering 255 to 264 has biased composition (low complexity); that stretch reads PSSPHASPTH. Phosphoserine; by CDK1 is present on residues S257, S261, and S265. Positions 265-281 are enriched in basic and acidic residues; the sequence is SPRENGIDKNRLLKKDA. An SP domain region spans residues 267 to 450; that stretch reads RENGIDKNRL…GGKPAYSFHV (184 aa). Residues 282-297 show a composition bias toward low complexity; it reads SGSPASTASSGSSSSL. Residue S284 is modified to Phosphoserine. The span at 298–308 shows a compositional bias: basic and acidic residues; sequence KSKEVSLHEKA. WD repeat units lie at residues 470 to 501, 528 to 558, 572 to 602, 614 to 644, 696 to 726, and 737 to 767; these read GIPR…HVYT, NRDN…SIWD, SSAP…AVWD, GHTD…RSWD, LHES…NAWR, and KESS…TVYE.

This sequence belongs to the WD repeat Groucho/TLE family. As to quaternary structure, homooligomer and heterooligomer with other family members. Binds RUNX1, RUNX3, FOXA2, KDM6A, UTY, histone H3, HESX1, ESRRG and the NF-kappa-B subunit RELA. Interacts with HES1 (via WRPW motif). Binds TCF7, LEF1, TCF7L1 and TCF7L2. Interacts with SIX3. Interacts with EFNB1. Interacts with TLE4. Interacts with FOXG1/BF-1; the interaction is inhibited by TLE6/GRG6. Phosphorylated, probably by CDK1. The degree of phosphorylation varies throughout the cell cycle, and is highest at the G2/M transition. Becomes hyperphosphorylated in response to cell differentiation and interaction with HES1 or RUNX1. Post-translationally, ubiquitinated by XIAP/BIRC4. In terms of tissue distribution, highly expressed in liver and lung. Detected at slightly lower levels in heart, brain, kidney and testis. Detected in fetal and adult stomach and small intestine, in adult ileum, duodenum and colon. Expressed in bone marrow-derived macrophages. Most abundant at the base of the crypts of Lieberkuhn in the small intestine.

It localises to the nucleus. Its subcellular location is the cytoplasm. Its function is as follows. Transcriptional corepressor that binds to a number of transcription factors. Inhibits NF-kappa-B-regulated gene expression. Inhibits the transcriptional activation mediated by FOXA2, and by CTNNB1 and TCF family members in Wnt signaling. Enhances FOXG1/BF-1- and HES1-mediated transcriptional repression. The effects of full-length TLE family members may be modulated by association with dominant-negative AES. Unusual function as coactivator for ESRRG. This is Transducin-like enhancer protein 1 (Tle1) from Mus musculus (Mouse).